We begin with the raw amino-acid sequence, 701 residues long: 2-isopropylmalate synthase (701 aa).

Residues 1–40 (MTTSESPDAYTESFGAHTIVKPAGPPRVGQPSWNPQRASS) form a disordered region. Positions 31 to 40 (PSWNPQRASS) are enriched in polar residues. The Pyruvate carboxyltransferase domain occupies 72-346 (PLWCAVDLRD…DPQIDFSNID (275 aa)). Mg(2+)-binding residues include Asp-81, His-285, His-287, and Asn-321. The segment at 491–701 (PVRPLERIRQ…VVSAVNRAAR (211 aa)) is regulatory domain. A VNTR1 repeat occupies 575–593 (VTIASPAQPGEAGRHASDP). A disordered region spans residues 581-670 (AQPGEAGRHA…EAGRHASDPV (90 aa)). The stretch at 594–612 (VTIASPAQPGEAGRHASDP) is one VNTR2 repeat. A VNTR3 repeat occupies 613 to 631 (VTIASPAQPGEAGRHASDP). The stretch at 632-650 (VTIASPAQPGEAGRHASDP) is one VNTR4 repeat. A VNTR5 repeat occupies 651–669 (VTIASPAQPGEAGRHASDP).

Belongs to the alpha-IPM synthase/homocitrate synthase family. LeuA type 2 subfamily. In terms of assembly, homodimer. It depends on Mg(2+) as a cofactor.

The protein localises to the cytoplasm. It catalyses the reaction 3-methyl-2-oxobutanoate + acetyl-CoA + H2O = (2S)-2-isopropylmalate + CoA + H(+). The protein operates within amino-acid biosynthesis; L-leucine biosynthesis; L-leucine from 3-methyl-2-oxobutanoate: step 1/4. In terms of biological role, catalyzes the condensation of the acetyl group of acetyl-CoA with 3-methyl-2-oxobutanoate (2-ketoisovalerate) to form 3-carboxy-3-hydroxy-4-methylpentanoate (2-isopropylmalate). In Mycobacterium bovis (strain ATCC BAA-935 / AF2122/97), this protein is 2-isopropylmalate synthase.